Consider the following 217-residue polypeptide: Small ribosomal subunit protein uS5 (217 aa).

Residues 49–112 (LEEKVLDVKL…AQAKKNIIRV (64 aa)) enclose the S5 DRBM domain.

The protein belongs to the universal ribosomal protein uS5 family. In terms of assembly, part of the 30S ribosomal subunit. Contacts protein S4.

In terms of biological role, with S4 and S12 plays an important role in translational accuracy. This chain is Small ribosomal subunit protein uS5, found in Methanocaldococcus jannaschii (strain ATCC 43067 / DSM 2661 / JAL-1 / JCM 10045 / NBRC 100440) (Methanococcus jannaschii).